The primary structure comprises 764 residues: MSLTPLLQLALLLALPRSLRGKGCPSPPCECHQEDDFRVTCKDIHSIPPLPPNTQTLKFIETHLKTIPSRAFSNLPNISRIYLSIDATLQQLESQSFYNLSKMTHIEIRNTRSLTYINPGALKDLPLLKFLGIFNTGLRIFPDLTKVYSTDVFFILEITDNPYMTSIPANAFQGLCNETLTLKLYNNGFTSVQGHAFNGTKLDAVYLNKNKYLTVIDKDAFGGVFSGPTLLDVSYTSVTALPPKGLEHLKELIARNTWTLKKLPLSLSFLHLTRADLSYPSHCCAFKNQKKIRGILESLMCNESSIRSLRQRKSVNAVNGPFYQEYEEDLGDSSVGNKENSKFQDTHSNSHYYVFFEEQEDEIIGFGQELKNPQEETLQAFDSHYDYTVCGGSEDMVCTPKSDEFNPCEDIMGYRFLRIVVWFVSLLALLGNVFVLVILLTSHYKLTVPRFLMCNLAFADFCMGMYLLLIASVDLYTQSEYYNHAIDWQTGPGCNTAGFFTVFASELSVYTLTVITLERWYAITFAMRLDRKIRLRHAYAIMAGGWVCCFLLALLPLVGISSYAKVSICLPMDTETPLALAYIILVLLLNIVAFTIVCSCYVKIYITVRNPQYNPGDKDTKIAKRMAVLIFTDFMCMAPISFYALSALMNKPLITVTNSKILLVLFYPLNSCANPFLYAIFTKAFQRDVFILLSKFGFCKRQAQAYRGQRVSPKNSTGIQVQKVTQNMRQSLPNMQDDYELLENSHLTHKKHDQISKEYKQPVL.

Residues 1-21 (MSLTPLLQLALLLALPRSLRG) form the signal peptide. At 22 to 413 (KGCPSPPCEC…EFNPCEDIMG (392 aa)) the chain is on the extracellular side. An intrachain disulfide couples C31 to C41. N-linked (GlcNAc...) asparagine glycosylation is found at N77 and N99. LRR repeat units follow at residues 125 to 150 (LPLLKFLGIFNTGLRIFPDLTKVYST), 151 to 174 (DVFFILEITDNPYMTSIPANAFQG), 176 to 199 (CNETLTLKLYNNGFTSVQGHAFNG), 201 to 223 (KLDAVYLNKNKYLTVIDKDAFGG), 225 to 248 (FSGPTLLDVSYTSVTALPPKGLEH), and 250 to 271 (KELIARNTWTLKKLPLSLSFLH). Residues N177 and N198 are each glycosylated (N-linked (GlcNAc...) asparagine). An N-linked (GlcNAc...) asparagine glycan is attached at N302. Residue Y385 is modified to Sulfotyrosine. A helical transmembrane segment spans residues 414 to 441 (YRFLRIVVWFVSLLALLGNVFVLVILLT). Residues 442–450 (SHYKLTVPR) lie on the Cytoplasmic side of the membrane. The chain crosses the membrane as a helical span at residues 451–473 (FLMCNLAFADFCMGMYLLLIASV). Topologically, residues 474-494 (DLYTQSEYYNHAIDWQTGPGC) are extracellular. C494 and C569 form a disulfide bridge. Residues 495–517 (NTAGFFTVFASELSVYTLTVITL) form a helical membrane-spanning segment. At 518-537 (ERWYAITFAMRLDRKIRLRH) the chain is on the cytoplasmic side. Residues 538–560 (AYAIMAGGWVCCFLLALLPLVGI) form a helical membrane-spanning segment. Topologically, residues 561 to 580 (SSYAKVSICLPMDTETPLAL) are extracellular. A helical transmembrane segment spans residues 581–602 (AYIILVLLLNIVAFTIVCSCYV). Residues 603 to 625 (KIYITVRNPQYNPGDKDTKIAKR) lie on the Cytoplasmic side of the membrane. Residues 626–649 (MAVLIFTDFMCMAPISFYALSALM) form a helical membrane-spanning segment. Residues 650–660 (NKPLITVTNSK) are Extracellular-facing. Residues 661 to 682 (ILLVLFYPLNSCANPFLYAIFT) form a helical membrane-spanning segment. At 683-764 (KAFQRDVFIL…ISKEYKQPVL (82 aa)) the chain is on the cytoplasmic side. The short motif at 762–764 (PVL) is the PDZ-binding element.

Belongs to the G-protein coupled receptor 1 family. FSH/LSH/TSH subfamily. Interacts with heterodimer GPHA2:GPHB5; this interaction stimulates cAMP production. Interacts (via the PDZ-binding motif) with SCRIB; regulates TSHR trafficking and function. In terms of processing, glycosylated. Sulfated. Sulfation on Tyr-385 plays a role in thyrotropin receptor binding and activation. In terms of tissue distribution, expressed in thyroide cells (at protein level).

The protein localises to the cell membrane. The protein resides in the basolateral cell membrane. In terms of biological role, receptor for the thyroid-stimulating hormone (TSH) or thyrotropin. Also acts as a receptor for the heterodimeric glycoprotein hormone (GPHA2:GPHB5) or thyrostimulin. The activity of this receptor is mediated by G proteins which activate adenylate cyclase. Plays a central role in controlling thyroid cell metabolism. The sequence is that of Thyrotropin receptor (TSHR) from Sus scrofa (Pig).